Reading from the N-terminus, the 235-residue chain is 7-cyano-7-deazaguanine synthase (235 aa).

Residue 16-26 coordinates ATP; that stretch reads FSGGQDSTTCL. Residues Cys-193, Cys-201, Cys-204, and Cys-207 each coordinate Zn(2+).

This sequence belongs to the QueC family. Zn(2+) serves as cofactor.

The catalysed reaction is 7-carboxy-7-deazaguanine + NH4(+) + ATP = 7-cyano-7-deazaguanine + ADP + phosphate + H2O + H(+). The protein operates within purine metabolism; 7-cyano-7-deazaguanine biosynthesis. Catalyzes the ATP-dependent conversion of 7-carboxy-7-deazaguanine (CDG) to 7-cyano-7-deazaguanine (preQ(0)). The protein is 7-cyano-7-deazaguanine synthase of Actinobacillus succinogenes (strain ATCC 55618 / DSM 22257 / CCUG 43843 / 130Z).